Reading from the N-terminus, the 139-residue chain is Protein archease (139 aa).

Ca(2+) contacts are provided by aspartate 12, aspartate 138, and isoleucine 139.

The protein belongs to the archease family.

Functionally, activates the tRNA-splicing ligase complex by facilitating the enzymatic turnover of catalytic subunit RtcB. Acts by promoting the guanylylation of RtcB, a key intermediate step in tRNA ligation. Can also alter the NTP specificity of RtcB such that ATP, dGTP or ITP is used efficiently. This Saccharolobus solfataricus (strain ATCC 35092 / DSM 1617 / JCM 11322 / P2) (Sulfolobus solfataricus) protein is Protein archease.